An 807-amino-acid chain; its full sequence is Glycerol-3-phosphate acyltransferase (807 aa).

Positions 308–313 (CHRSHM) match the HXXXXD motif motif.

It belongs to the GPAT/DAPAT family.

The protein resides in the cell inner membrane. It catalyses the reaction sn-glycerol 3-phosphate + an acyl-CoA = a 1-acyl-sn-glycero-3-phosphate + CoA. It participates in phospholipid metabolism; CDP-diacylglycerol biosynthesis; CDP-diacylglycerol from sn-glycerol 3-phosphate: step 1/3. The chain is Glycerol-3-phosphate acyltransferase from Shewanella amazonensis (strain ATCC BAA-1098 / SB2B).